The primary structure comprises 2441 residues: MAENLLDGPPNPKRAKLSSPGFSANDNTDFGSLFDLENDLPDELIPNGELSLLNSGNLVPDAASKHKQLSELLRGGSGSSINPGIGNVSASSPVQQGLGGQAQGQPNSTNMASLGAMGKSPLNQGDSSTPNLPKQAASTSGPTPPASQALNPQAQKQVGLVTSSPATSQTGPGICMNANFNQTHPGLLNSNSGHSLMNQAQQGQAQVMNGSLGAAGRGRGAGMPYPAPAMQGATSSVLAETLTQVSPQMAGHAGLNTAQAGGMTKMGMTGTTSPFGQPFSQTGGQQMGATGVNPQLASKQSMVNSLPAFPTDIKNTSVTTVPNMSQLQTSVGIVPTQAIATGPTADPEKRKLIQQQLVLLLHAHKCQRREQANGEVRACSLPHCRTMKNVLNHMTHCQAGKACQVAHCASSRQIISHWKNCTRHDCPVCLPLKNASDKRNQQTILGSPASGIQNTIGSVGAGQQNATSLSNPNPIDPSSMQRAYAALGLPYMNQPQTQLQPQVPGQQPAQPPAHQQMRTLNALGNNPMSIPAGGITTDQQPPNLISESALPTSLGATNPLMNDGSNSGNIGSLSTIPTAAPPSSTGVRKGWHEHVTQDLRSHLVHKLVQAIFPTPDPAALKDRRMENLVAYAKKVEGDMYESANSRDEYYHLLAEKIYKIQKELEEKRRSRLHKQGILGNQPALPASGAQPPVIPPAQSVRPPNGPLPLPVNRMQVSQGMNSFNPMSLGNVQLPQAPMGPRAASPMNHSVQMNSMASVPGMAISPSRMPQPPNMMGTHANNIMAQAPTQNQFLPQNQFPSSSGAMSVNSVGMGQPAAQAGVSQGQVPGAALPNPLNMLAPQASQLPCPPVTQSPLHPTPPPASTAAGMPSLQHPTAPGMTPPQPAAPTQPSTPVSSGQTPTPTPGSVPSAAQTQSTPTVQAAAQAQVTPQPQTPVQPPSVATPQSSQQQPTPVHTQPPGTPLSQAAASIDNRVPTPSSVTSAETSSQQPGPDVPMLEMKTEVQTDDAEPEPTESKGEPRSEMMEEDLQGSSQVKEETDTTEQKSEPMEVEEKKPEVKVEAKEEEENSSNDTASQSTSPSQPRKKIFKPEELRQALMPTLEALYRQDPESLPFRQPVDPQLLGIPDYFDIVKNPMDLSTIKRKLDTGQYQEPWQYVDDVWLMFNNAWLYNRKTSRVYKFCSKLAEVFEQEIDPVMQSLGYCCGRKYEFSPQTLCCYGKQLCTIPRDAAYYSYQNRYHFCEKCFTEIQGENVTLGDDPSQPQTTISKDQFEKKKNDTLDPEPFVDCKECGRKMHQICVLHYDIIWPSGFVCDNCLKKTGRPRKENKFSAKRLQTTRLGNHLEDRVNKFLRRQNHPEAGEVFVRVVASSDKTVEVKPGMKSRFVDSGEMSESFPYRTKALFAFEEIDGVDVCFFGMHVQNTALIAPHQIQGRVYISYLDSIHFFRPRCLRTAVYHEILIGYLEYVKKLGYVTGHIWACPPSEGDDYIFHCHPPDQKIPKPKRLQEWYKKMLDKAFAERIINDYKDIFKQANEDRLTSAKELPYFEGDFWPNVLEESIKELEQEEEERKKEESTAASETPEGSQGDSKNAKKKNNKKTNKNKSSISRANKKKPSMPNVSNDLSQKLYATMEKHKEVFFVIHLHAGPVISTQPPIVDPDPLLSCDLMDGRDAFLTLARDKHWEFSSLRRSKWSTLCMLVELHTQGQDRFVYTCNECKHHVETRWHCTVCEDYDLCINCYNTKSHTHKMVKWGLGLDDEGSSQGEPQSKSPQESRRLSIQRCIQSLVHACQCRNANCSLPSCQKMKRVVQHTKGCKRKTNGGCPVCKQLIALCCYHAKHCQENKCPVPFCLNIKHKLRQQQIQHRLQQAQLMRRRMATMNTRNVPQQSLPSPTSAPPGTPTQQPSTPQTPQPPAQPQPSPVNMSPAGFPNVARTQPPTIVSAGKPTNQVPAPPPPAQPPPAAVEAARQIEREAQQQQHLYRANINNGMPPGRAGMGTPGSQMTPVGLNVPRPNQVSGPVMSSMPPGQWQQAPIPQQQPMPGMPRPVMSMQAQAAVAGPRMPNVQPPRSISPSALQDLLRTLKSPSSPQQQQQVLNILKSNPQLMAAFIKQRTAKYVANQPGMQPQPGLQSQPGMQPQPGMHQQPSLQNLNAMQAGVPRPGVPPPQPAMGGLNPQGQALNIMNPGHNPNMTNMNPQYREMVRRQLLQHQQQQQQQQQQQQQQQNSASLAGGMAGHSQFQQPQGPGGYAPAMQQQRMQQHLPIQGSSMGQMAAPMGQLGQMGQPGLGADSTPNIQQALQQRILQQQQMKQQIGSPGQPNPMSPQQHMLSGQPQASHLPGQQIATSLSNQVRSPAPVQSPRPQSQPPHSSPSPRIQPQPSPHHVSPQTGSPHPGLAVTMASSMDQGHLGNPEQSAMLPQLNTPNRSALSSELSLVGDTTGDTLEKFVEGL.

Disordered regions lie at residues Met1 to Asp29 and Leu73 to Ser168. Ala2 carries the post-translational modification N-acetylalanine. Over residues Pro20–Asp29 the composition is skewed to polar residues. Residues Ser79–Ser89 are compositionally biased toward low complexity. The residue at position 120 (Ser120) is a Phosphoserine. Over residues Pro121 to Ser168 the composition is skewed to polar residues. At Arg219 the chain carries Omega-N-methylarginine. An interaction with SRCAP region spans residues Pro226 to Ala409. Residues Gly261 to Thr272 show a composition bias toward low complexity. The tract at residues Gly261–Val292 is disordered. Polar residues predominate over residues Ser273 to Val292. A TAZ-type 1 zinc finger spans residues Asp346 to Leu432. Residues His362, Cys366, Cys379, Cys384, His393, Cys397, Cys403, Cys408, His417, Cys421, Cys426, and Cys429 each coordinate Zn(2+). Residues Gly586 to Glu665 enclose the KIX domain. Asymmetric dimethylarginine occurs at positions 600 and 624. At Lys656 the chain carries N6-acetyllysine. Over residues Phe792–Gly811 the composition is skewed to polar residues. Positions Phe792 to Pro1088 are disordered. Pro residues predominate over residues Pro846–Ala862. Positions Val894 to Ser906 are enriched in polar residues. Low complexity-rich tracts occupy residues Ser909 to Gln930 and Pro938 to Pro957. Over residues Pro974–Pro989 the composition is skewed to polar residues. Lys999 participates in a covalent cross-link: Glycyl lysine isopeptide (Lys-Gly) (interchain with G-Cter in SUMO1). Over residues Thr1012–Met1022 the composition is skewed to basic and acidic residues. Residue Lys1015 is modified to N6-acetyllysine. The residue at position 1031 (Ser1031) is a Phosphoserine. Basic and acidic residues predominate over residues Val1033–Ala1060. Glycyl lysine isopeptide (Lys-Gly) (interchain with G-Cter in SUMO1) cross-links involve residues Lys1034 and Lys1057. Polar residues predominate over residues Ser1068–Gln1080. Ser1077 carries the post-translational modification Phosphoserine. Residues Phe1086 to Val1193 form the Bromo domain. The interaction with histone stretch occupies residues Asp1125–Lys1171. The segment at Asn1163–Lys1181 is interaction with ASF1A. Lys1217 carries the N6-acetyllysine modification. The CBP/p300-type HAT domain occupies Lys1324–Gln1701. Ser1383 and Ser1387 each carry phosphoserine; by IKKA. Residues Tyr1434–Asp1436 form an interaction with histone region. Residues Leu1435 to Ser1437, Arg1447 to Thr1448, Ile1494, Arg1499, and Trp1503 each bind acetyl-CoA. A compositionally biased stretch (basic and acidic residues) spans Leu1557–Ser1569. The interval Leu1557–Asn1616 is disordered. 5 positions are modified to N6-acetyllysine: Lys1584, Lys1592, Lys1593, Lys1596, and Lys1598. A compositionally biased stretch (basic residues) spans Ala1586–Lys1596. A ZZ-type zinc finger spans residues Arg1703–Asp1751. Zn(2+)-binding residues include Cys1708, Cys1711, Cys1721, Cys1724, Cys1730, Cys1733, His1739, and His1741. Lys1742 and Lys1745 each carry N6-acetyllysine. Ser1764 is subject to Phosphoserine. The TAZ-type 2 zinc-finger motif lies at Gln1766–Ile1847. Residues Thr1875–Ala1959 are disordered. Composition is skewed to pro residues over residues Pro1901–Ser1913 and Pro1944–Ala1955. Phosphoserine occurs at positions 2064, 2077, and 2080. Residues Asn2112 to Ser2421 are disordered. Positions Gln2113–Pro2138 are enriched in low complexity. Residues Pro2167–Pro2188 show a composition bias toward polar residues. Low complexity-rich tracts occupy residues Gln2197–Gln2216, Met2260–Gly2279, and Ile2286–Ile2304. 2 stretches are compositionally biased toward polar residues: residues Ser2314–Ala2326 and Gln2333–Val2342. Residues Val2348–Ser2371 are compositionally biased toward pro residues. Ser2350 carries the post-translational modification Phosphoserine. Residues Gln2410 to Ser2421 show a composition bias toward polar residues.

As to quaternary structure, part of a complex composed of MSX3, CREBBP/CBP AND EP300/p300; the interaction with MSX3 decreases histone acetylation activity. Interacts with DHX9 (via N-terminus); this interaction mediates association with RNA polymerase II holoenzyme and stimulates CREB-dependent transcriptional activation. Interacts (via transactivation domain and C-terminus) with PCNA; the interaction occurs on chromatin in UV-irradiated damaged cells. Found in a complex containing NCOA2; NCOA3; IKKA; IKKB and IKBKG. Probably part of a complex with HIF1A and EP300. The TAZ-type 1 domain interacts with HIF1A. Interacts with SRCAP, ELF3, MLLT7/FOXO4, N4BP2, NCOA6, PCAF, PELP1, PML, SMAD1, SMAD2, SMAD3, SPIB and TRERF1. Interacts with KLF1; the interaction results in acetylation and enhancement of transcriptional activity of KLF1. Interacts with MAFG; the interaction acetylates MAFG in the basic region and stimulates NFE2 transcriptional activity through increasing its DNA-binding activity. Interacts with IRF2; the interaction acetylates IRF2 and regulates its activity on the H4 promoter. Interacts with IRF3 (when phosphorylated); forming the dsRNA-activated factor 1 (DRAF1), a complex which activates the transcription of the type I interferon genes. Interacts (via N-terminus) with SS18L1/CREST (via C-terminus). Interacts with FOXO1; the interaction acetylates FOXO1 and inhibits its transcriptional activity. Interacts with MECOM and MTDH. Interacts with ASF1A and ASF1B; this promotes histone acetylation. Interacts with acetylated TP53/p53 and with the acetylated histones H3 and H4. Interacts with CITED1 (via C-terminus). Interacts with GATA1; the interaction results in acetylation and enhancement of transcriptional activity of GATA1. Interacts with MAF, CARM1. NCOA3, ZCCHC12, DDX17, DDX5 and CITED4 (C-terminal region). Interacts with phosphorylated CREB1. Interacts with DAXX; the interaction is dependent on CBP sumoylation and results in suppression of the transcriptional activity via recruitment of HDAC2 to DAXX. Interacts with NPAS2, CLOCK and BMAL1. Interacts with SMAD4; negatively regulated by ZBTB7A. Forms a complex with KMT2A and CREB1. Interacts with DDX3X; this interaction may facilitate HNF4A acetylation. Interacts with MSX1; the interaction may inhibit MSX1 autoinactivation. Interacts with MSX3. Interacts with ACSS2. Methylation of the KIX domain by CARM1 blocks association with CREB. This results in the blockade of CREB signaling, and in activation of apoptotic response. In terms of processing, phosphorylated by CHUK/IKKA at Ser-1383 and Ser-1387; these phosphorylations promote cell growth by switching the binding preference of CREBBP from TP53 to NF-kappa-B. Post-translationally, sumoylation negatively regulates transcriptional activity via the recruitment of DAAX. Autoacetylation is required for binding to protein substrates, such as acetylated histones and acetylated TP53/p53. Autoacetylation is induced by glucose and fatty acids.

The protein localises to the cytoplasm. Its subcellular location is the nucleus. It carries out the reaction L-lysyl-[histone] + acetyl-CoA = N(6)-acetyl-L-lysyl-[histone] + CoA + H(+). The catalysed reaction is L-lysyl-[protein] + acetyl-CoA = N(6)-acetyl-L-lysyl-[protein] + CoA + H(+). The enzyme catalyses (S)-lactoyl-CoA + L-lysyl-[protein] = N(6)-[(S)-lactoyl]-L-lysyl-[protein] + CoA + H(+). Functionally, acetylates histones, giving a specific tag for transcriptional activation. Mediates acetylation of histone H3 at 'Lys-18' and 'Lys-27' (H3K18ac and H3K27ac, respectively). Also acetylates non-histone proteins, like DDX21, FBL, IRF2, MAFG, NCOA3, POLR1E/PAF53 and FOXO1. Binds specifically to phosphorylated CREB and enhances its transcriptional activity toward cAMP-responsive genes. Acts as a coactivator of ALX1. Acts as a circadian transcriptional coactivator which enhances the activity of the circadian transcriptional activators: NPAS2-BMAL1 and CLOCK-BMAL1 heterodimers. Acetylates PCNA; acetylation promotes removal of chromatin-bound PCNA and its degradation during nucleotide excision repair (NER). Acetylates POLR1E/PAF53, leading to decreased association of RNA polymerase I with the rDNA promoter region and coding region. Acetylates DDX21, thereby inhibiting DDX21 helicase activity. Acetylates FBL, preventing methylation of 'Gln-105' of histone H2A (H2AQ104me). In addition to protein acetyltransferase, can use different acyl-CoA substrates, such as lactoyl-CoA, and is able to mediate protein lactylation. Catalyzes lactylation of MRE11 in response to DNA damage, thereby promoting DNA double-strand breaks (DSBs) via homologous recombination (HR). Functions as a transcriptional coactivator for SMAD4 in the TGF-beta signaling pathway. The polypeptide is Histone lysine acetyltransferase CREBBP (Crebbp) (Mus musculus (Mouse)).